The primary structure comprises 348 residues: sn-glycerol-3-phosphate import ATP-binding protein UgpC 3 (348 aa).

One can recognise an ABC transporter domain in the interval 4–234; the sequence is INIVDVKKNY…PASLFVAGFI (231 aa). ATP is bound at residue 36 to 43; sequence GPSGCGKS.

Belongs to the ABC transporter superfamily. sn-glycerol-3-phosphate importer (TC 3.A.1.1.3) family. The complex is composed of two ATP-binding proteins (UgpC), two transmembrane proteins (UgpA and UgpE) and a solute-binding protein (UgpB).

The protein resides in the cell inner membrane. It carries out the reaction sn-glycerol 3-phosphate(out) + ATP + H2O = sn-glycerol 3-phosphate(in) + ADP + phosphate + H(+). Functionally, part of the ABC transporter complex UgpBAEC involved in sn-glycerol-3-phosphate (G3P) import. Responsible for energy coupling to the transport system. This chain is sn-glycerol-3-phosphate import ATP-binding protein UgpC 3, found in Rhizobium etli (strain ATCC 51251 / DSM 11541 / JCM 21823 / NBRC 15573 / CFN 42).